A 155-amino-acid polypeptide reads, in one-letter code: DNA-directed RNA polymerases I, II, and III subunit RPABC2 (155 aa).

A compositionally biased stretch (acidic residues) spans Met1 to Asp19. A disordered region spans residues Met1–Asp57. Residues Val20–Glu39 show a composition bias toward basic and acidic residues. Ser24 carries the post-translational modification Phosphoserine. The segment at Leu111–Leu132 is leucine-zipper.

It belongs to the archaeal Rpo6/eukaryotic RPB6 RNA polymerase subunit family. As to quaternary structure, component of the RNA polymerase I (Pol I), RNA polymerase II (Pol II) and RNA polymerase III (Pol III) complexes. Component of the RNA polymerase I (Pol I) complex consisting of 14 subunits: RPA135, RPA190, RPC40, RPA14, RPB5, RPO26, RPA43, RPB8, RPA12, RPB10, RPC19, RPC10, RPA49 and RPA34. The complex is composed of a horseshoe-shaped core containing ten subunits (RPA135, RPA190, RPB5, RPO26, RPB8, RPB10, RPC10, RPA12, RPC19 and RPC40) where RPA135 and RPA190 form the DNA-binding cleft. Outside of the core, RPA14 and RPA43 form the stalk that mediates interactions with transcription initiation factors and newly synthesized RNA. Component of the RNA polymerase II (Pol II) complex consisting of 12 subunits: RPO21, RPB2, RPB3, RPB4, RPB5, RPO26, RPB7, RPB8, RPB9, RPB10 and RPC10. Component of the RNA polymerase III (Pol III) complex consisting of 17 subunits.

It localises to the cytoplasm. The protein resides in the nucleus. DNA-dependent RNA polymerases catalyze the transcription of DNA into RNA using the four ribonucleoside triphosphates as substrates. Common component of RNA polymerases I, II and III which synthesize ribosomal RNA precursors, mRNA precursors and many functional non-coding RNAs, and small RNAs, such as 5S rRNA and tRNAs, respectively. Pol II is the central component of the basal RNA polymerase II transcription machinery. RNA polymerases are composed of mobile elements that move relative to each other. In Pol II, RPB6 is part of the clamp element and together with parts of RPB1 and RPB2 forms a pocket to which the RPB4-RPB7 subcomplex binds. In Saccharomyces cerevisiae (strain ATCC 204508 / S288c) (Baker's yeast), this protein is DNA-directed RNA polymerases I, II, and III subunit RPABC2 (RPO26).